Consider the following 333-residue polypeptide: MTPSTPADDAWIRSYQRLLPESQSLLASRRSVIPVAISRVNQFDAARLDVEMSAMLKEQLVKVFTLMKPGMLFQYEPELDAFLEFLIWRFSIWVDKPTPGNALMNLRYRDERGVVAQHLGKVRTGLEGPGLTSPQKIWYCVASVGGQYLFSRLQSFSAFRRWGDSEQRPLARRLWTLVQRIEGIYKAASFLNLLSFLYTGRYRNLIEKALKARLVYRSPHMNRSVSFEYMNRQLVWNEFSEMLLLLLPLLNSSAVKNILSPFAKDKSSSTKEDTVTCPICQVDPAIPFIALPCQHRYCYYCIRTRCASAASFRCLRCNEPVVAIQREGVSSGK.

Topologically, residues 1 to 38 are peroxisomal matrix; sequence MTPSTPADDAWIRSYQRLLPESQSLLASRRSVIPVAIS. A helical membrane pass occupies residues 39-65; that stretch reads RVNQFDAARLDVEMSAMLKEQLVKVFT. Residues 66 to 71 lie on the Cytoplasmic side of the membrane; it reads LMKPGM. Residues 72–97 form a helical membrane-spanning segment; sequence LFQYEPELDAFLEFLIWRFSIWVDKP. Residues 98–131 lie on the Peroxisomal matrix side of the membrane; the sequence is TPGNALMNLRYRDERGVVAQHLGKVRTGLEGPGL. The chain crosses the membrane as a helical span at residues 132-158; the sequence is TSPQKIWYCVASVGGQYLFSRLQSFSA. Topologically, residues 159–168 are cytoplasmic; it reads FRRWGDSEQR. The helical transmembrane segment at 169-199 threads the bilayer; sequence PLARRLWTLVQRIEGIYKAASFLNLLSFLYT. The Peroxisomal matrix segment spans residues 200-226; that stretch reads GRYRNLIEKALKARLVYRSPHMNRSVS. Residues 227 to 250 traverse the membrane as a helical segment; that stretch reads FEYMNRQLVWNEFSEMLLLLLPLL. Residues 251–333 lie on the Cytoplasmic side of the membrane; that stretch reads NSSAVKNILS…IQREGVSSGK (83 aa). Zn(2+) contacts are provided by C277, C280, C293, H295, C298, C301, C314, and C317. The RING-type zinc-finger motif lies at 277 to 318; the sequence is CPICQVDPAIPFIALPCQHRYCYYCIRTRCASAASFRCLRCN.

Belongs to the pex2/pex10/pex12 family. Component of the PEX2-PEX10-PEX12 retrotranslocation channel. Interacts with DSK2a and DSK2b. Expressed in roots, stems, leaves, flowers, pollen, ovules, seeds and siliques.

The protein localises to the peroxisome membrane. The catalysed reaction is [E2 ubiquitin-conjugating enzyme]-S-ubiquitinyl-L-cysteine + [acceptor protein]-L-cysteine = [E2 ubiquitin-conjugating enzyme]-L-cysteine + [acceptor protein]-S-ubiquitinyl-L-cysteine.. Its pathway is protein modification; protein ubiquitination. In terms of biological role, E3 ubiquitin-protein ligase component of a retrotranslocation channel required for peroxisome organization by mediating export of the PEX5 receptor from peroxisomes to the cytosol, thereby promoting PEX5 recycling. The retrotranslocation channel is composed of PEX2, PEX10 and PEX12; each subunit contributing transmembrane segments that coassemble into an open channel that specifically allows the passage of PEX5 through the peroxisomal membrane. PEX2 also regulates peroxisome organization by acting as a E3 ubiquitin-protein ligase. PEX2 ubiquitinates PEX5 during its passage through the retrotranslocation channel: catalyzes monoubiquitination of PEX5 at 'Cys-6', a modification that acts as a signal for PEX5 extraction into the cytosol. This is Peroxisome biogenesis protein 2 (PEX2) from Arabidopsis thaliana (Mouse-ear cress).